The primary structure comprises 358 residues: uncharacterized protein (358 aa).

The segment at 324–358 is disordered; it reads DMEVEETPPTTNKDLPRGATQPKRNSIKRVSKLID. Over residues 348–358 the composition is skewed to basic residues; that stretch reads NSIKRVSKLID.

This is an uncharacterized protein from Mycoplasma pneumoniae (strain ATCC 29342 / M129 / Subtype 1) (Mycoplasmoides pneumoniae).